Consider the following 303-residue polypeptide: Cytosolic Fe-S cluster assembly factor CFD1 (303 aa).

Residue 15 to 22 (GKGGVGKS) participates in ATP binding. The [4Fe-4S] cluster site is built by Cys199 and Cys202.

Belongs to the Mrp/NBP35 ATP-binding proteins family. NUBP2/CFD1 subfamily. In terms of assembly, heterotetramer of 2 NBP35 and 2 CFD1 chains. The cofactor is [4Fe-4S] cluster.

It localises to the cytoplasm. Its function is as follows. Component of the cytosolic iron-sulfur (Fe/S) protein assembly (CIA) machinery. Required for maturation of extramitochondrial Fe-S proteins. The NBP35-CFD1 heterotetramer forms a Fe-S scaffold complex, mediating the de novo assembly of an Fe-S cluster and its transfer to target apoproteins. The polypeptide is Cytosolic Fe-S cluster assembly factor CFD1 (Chaetomium globosum (strain ATCC 6205 / CBS 148.51 / DSM 1962 / NBRC 6347 / NRRL 1970) (Soil fungus)).